The following is a 186-amino-acid chain: uncharacterized protein (186 aa).

A Cupin type-2 domain is found at 89–164 (LMSLGIGEDI…NTPLKLYSIY (76 aa)). 117 to 124 (GIVKMGKS) serves as a coordination point for ATP.

This is an uncharacterized protein from Bacillus subtilis (strain 168).